The chain runs to 620 residues: Glutathione-regulated potassium-efflux system protein KefC (620 aa).

Over 1-3 (MDS) the chain is Periplasmic. The helical transmembrane segment at 4–24 (HTLLQALIYLGSAALIVPIAV) threads the bilayer. Arginine 25 is a topological domain (cytoplasmic). Residues 26 to 46 (LGLGSVLGYLIAGCIIGPWGL) traverse the membrane as a helical segment. At 47–53 (RLVTDAE) the chain is on the periplasmic side. Residues 54–74 (SILHFAEIGVVLMLFVIGLEL) form a helical membrane-spanning segment. Topologically, residues 75–89 (DPQRLWKLRASVFGG) are cytoplasmic. A helical membrane pass occupies residues 90 to 110 (GALQMGVCGGLIGLFCMFLGL). At 111-113 (RWQ) the chain is on the periplasmic side. The chain crosses the membrane as a helical span at residues 114–134 (VAELIGMTLALSSTAIAMQAM). Residues 135-148 (NERNLTVSQVGRSA) are Cytoplasmic-facing. A helical transmembrane segment spans residues 149 to 169 (FAVLLFQDIAAIPLVAMIPLL). Residues 170–177 (AASGASTT) are Periplasmic-facing. A helical transmembrane segment spans residues 178–198 (LGAFALSALKVAGALALVVLL). At 199–213 (GRYVTRPALRFVARS) the chain is on the cytoplasmic side. The chain crosses the membrane as a helical span at residues 214 to 233 (GLREVFSAVALFLVFGFGLL). The Periplasmic portion of the chain corresponds to 234-236 (LEE). Residues 237–254 (VGLSMAMGAFLAGVLLAS) traverse the membrane as a helical segment. Over 255-269 (SEYRHALESDIEPFK) the chain is Cytoplasmic. A helical membrane pass occupies residues 270-290 (GLLLGLFFIGVGMSIDFGTLV). Topologically, residues 291–293 (ENP) are periplasmic. The chain crosses the membrane as a helical span at residues 294-314 (LRILLLLAGFLAIKIVMLWLV). The Cytoplasmic portion of the chain corresponds to 315–326 (ARPLGVPAKQRR). A helical membrane pass occupies residues 327–347 (WFAVLLGQGSEFAFVVFGAAQ). At 348 to 358 (MADVLEPEWAK) the chain is on the periplasmic side. A helical membrane pass occupies residues 359–379 (ALTLAVALSMAATPIFLVLLT). The Cytoplasmic portion of the chain corresponds to 380–620 (RMEKTATGEA…ADEPEVKPSI (241 aa)). Residues 399 to 518 (QPRVIVAGFG…AGVAMPERET (120 aa)) enclose the RCK N-terminal domain. The tract at residues 599–620 (QGTAEGKHSGEVADEPEVKPSI) is disordered.

It belongs to the monovalent cation:proton antiporter 2 (CPA2) transporter (TC 2.A.37) family. KefC subfamily. Homodimer. Interacts with the regulatory subunit KefF.

The protein localises to the cell inner membrane. Functionally, pore-forming subunit of a potassium efflux system that confers protection against electrophiles. Catalyzes K(+)/H(+) antiport. The chain is Glutathione-regulated potassium-efflux system protein KefC from Salmonella typhimurium (strain LT2 / SGSC1412 / ATCC 700720).